Consider the following 267-residue polypeptide: 7alpha-hydroxysteroid dehydrogenase (267 aa).

Residues 13–18 (SATRGI), R38, 63–64 (DA), and N90 contribute to the NADP(+) site. The cholate site is built by S145 and Y158. NADP(+) contacts are provided by residues Y158, K162, and 191 to 195 (IATDA). Y158 serves as the catalytic Proton acceptor.

The protein belongs to the short-chain dehydrogenases/reductases (SDR) family. In terms of assembly, homotetramer.

The enzyme catalyses cholate + NADP(+) = 3alpha,12alpha-dihydroxy-7-oxo-5beta-cholanate + NADPH + H(+). It carries out the reaction chenodeoxycholate + NADP(+) = 7-oxolithocholate + NADPH + H(+). 7alpha-hydroxysteroid dehydrogenase that catalyzes the NADP(+)-dependent oxidation of the 7alpha-hydroxy group of 7alpha-hydroxysteroids, such as the major human bile acids cholate and chenodeoxycholate, to the corresponding 7-oxosteroids. Is thus liley involved in the metabolism of primary bile acids. The sequence is that of 7alpha-hydroxysteroid dehydrogenase from Paraclostridium sordellii (Clostridium sordellii).